The sequence spans 288 residues: Serpentine receptor class gamma-1 (288 aa).

7 consecutive transmembrane segments (helical) span residues 25-45 (LFLQ…VIYI), 59-79 (FYTI…FSIF), 118-138 (FQIL…LWPL), 148-168 (LKSI…TIAI), 197-217 (FSIL…TMLI), 238-258 (VYLS…FLVL), and 268-288 (ILHG…TYVM).

This sequence belongs to the nematode receptor-like protein srg family.

The protein resides in the membrane. This chain is Serpentine receptor class gamma-1 (srg-1), found in Caenorhabditis elegans.